Consider the following 208-residue polypeptide: Thymidylate kinase (208 aa).

10–17 (GPEGSGKT) is a binding site for ATP.

This sequence belongs to the thymidylate kinase family.

It carries out the reaction dTMP + ATP = dTDP + ADP. Phosphorylation of dTMP to form dTDP in both de novo and salvage pathways of dTTP synthesis. The chain is Thymidylate kinase from Bacillus cereus (strain 03BB102).